Consider the following 192-residue polypeptide: Cytochrome b-245 light chain (192 aa).

Topologically, residues 2–7 (GQIEWA) are cytoplasmic. A helical transmembrane segment spans residues 8–30 (MWANEQALASGLILITGGIVATA). Residues 31 to 35 (GRFTQ) are Extracellular-facing. Residues 36-53 (WYFGAYSIVAGVLICLLE) form a helical membrane-spanning segment. At 54–69 (YPRGKRKKGSTMERCG) the chain is on the cytoplasmic side. The stretch at 70–80 (QKYLTAVVKLF) is an intramembrane region. Topologically, residues 81–86 (GPLTRN) are cytoplasmic. The helical transmembrane segment at 87–104 (YYVRAVLHLLLSVPAGFL) threads the bilayer. Residue leucine 105 is a topological domain, extracellular. The helical transmembrane segment at 106–126 (ATILGTVCLAIASVIYLLAAI) threads the bilayer. The Cytoplasmic segment spans residues 127 to 192 (RGEQWTPIEP…NPIPVTDEVV (66 aa)). Residues 134 to 192 (IEPKPKERPQVGGTIKQPPTNPPPRPPAEVRKKPSEAEEEAASAGGPQVNPIPVTDEVV) are disordered. Phosphothreonine is present on threonine 147. A Glycyl lysine isopeptide (Lys-Gly) (interchain with G-Cter in ubiquitin) cross-link involves residue lysine 149. Phosphoserine occurs at positions 168 and 176.

Belongs to the p22phox family. Component of the phagocyte NADPH oxidase core complex/cytochrome b558 complex, composed of CYBB (heavy chain (beta)) and CYBA (light chain (alpha)). Component of the phagocyte NADPH oxidase complex composed of an obligatory core heterodimer formed by the membrane proteins CYBA and CYBB and the cytosolic regulatory subunits NCF1/p47-phox, NCF2/p67-phox, NCF4/p40-phox and the small GTPase RAC1 or RAC2. Interacts with NCF1 (via SH3 domain). Interacts with SH3PXD2A. Interacts with DUOX1, DUOX2 and TPO. Interacts with NOX4; this interaction mediates superoxide generation. Interacts with calprotectin (S100A8/9). Interacts with GBP7. Interacts with NOXO1. Forms a heterodimer with NOX3 and is essential for activity and cell membrane localization of NOX3. Interacts with NOX1. In terms of processing, phosphorylation at Thr-147 enhances NADPH oxidase activity by promoting NCF1/p47-phox binding. Ubiquitinated at Lys-149 likely by RNF145. In terms of tissue distribution, expressed to a relatively high level in kidney, spleen, thymus and lung, and to a lower level in aorta, adrenals, and heart. Expression is not detected in liver or brain.

It localises to the cell membrane. Its function is as follows. Subunit of NADPH oxidase complexes that is required for the NADPH oxidase activity that generates, in various cell types, superoxide from molecular oxygen utilizing NADPH as an electron donor. Subunit of the phagocyte NADPH oxidase complex that mediates the transfer of electrons from cytosolic NADPH to O2 to produce the superoxide anion (O2(-)). In the activated complex, electrons are first transferred from NADPH to flavin adenine dinucleotide (FAD) and subsequently transferred via two heme molecules to molecular oxygen, producing superoxide through an outer-sphere reaction. Activation of the NADPH oxidase complex is initiated by the assembly of cytosolic subunits of the NADPH oxidase complex with the core NADPH oxidase complex to form a complex at the plasma membrane or phagosomal membrane. This activation process is initiated by phosphorylation dependent binding of the cytosolic NCF1/p47-phox subunit to the C-terminus of CYBA/p22-phox. Aassociates with NOX3 to form a functional NADPH oxidase constitutively generating superoxide. The chain is Cytochrome b-245 light chain from Rattus norvegicus (Rat).